A 312-amino-acid polypeptide reads, in one-letter code: uncharacterized protein (312 aa).

This is an uncharacterized protein from Escherichia coli (strain K12).